A 38-amino-acid polypeptide reads, in one-letter code: Toxic protein TimP (38 aa).

The chain crosses the lipid bilayer at residues 1–20 (MKVRCFCVVLLVSGTLCLHA).

This sequence belongs to the TimP toxin family.

It is found in the cell inner membrane. Its function is as follows. Toxic component of a probable type I toxin-antitoxin (TA) system. Neutralized by sRNA antitoxin TimR which binds to the 5' UTR of timP mRNA and inhibits translation. When TimP is expressed from its promoter in the absence of antitoxin leads to mild cell stress; overexpression in situ is toxic to the cell and causes membrane leakage. The antitoxin gene is encoded immediately upstream and transcribed divergently from the toxin gene; antitoxin RNA is less stable than timP mRNA. The sequence is that of Toxic protein TimP from Salmonella typhimurium (strain SL1344).